A 578-amino-acid chain; its full sequence is Membrane protein insertase YidC (578 aa).

Residues 7–27 (FLAIAISLGILLGFQGLYRHF) traverse the membrane as a helical segment. The segment at 35–70 (ARTATNAGQGKPNNTLGAVPTDATASQSPPPKEGAR) is disordered. Residues 37-50 (TATNAGQGKPNNTL) show a composition bias toward polar residues. The next 4 membrane-spanning stretches (helical) occupy residues 362–382 (LVGN…AAFY), 436–456 (LPML…FVTI), 491–511 (HISP…TMYL), and 530–550 (FMPI…VIYW).

The protein belongs to the OXA1/ALB3/YidC family. Type 1 subfamily. Interacts with the Sec translocase complex via SecD. Specifically interacts with transmembrane segments of nascent integral membrane proteins during membrane integration.

The protein localises to the cell inner membrane. Its function is as follows. Required for the insertion and/or proper folding and/or complex formation of integral membrane proteins into the membrane. Involved in integration of membrane proteins that insert both dependently and independently of the Sec translocase complex, as well as at least some lipoproteins. Aids folding of multispanning membrane proteins. This chain is Membrane protein insertase YidC, found in Granulibacter bethesdensis (strain ATCC BAA-1260 / CGDNIH1).